Reading from the N-terminus, the 215-residue chain is Calcium-binding protein 7 (215 aa).

Residues 1 to 188 (MPFHPVTAAL…QIRQTCVRKS (188 aa)) are Cytoplasmic-facing. 2 consecutive EF-hand domains span residues 33-68 (DELE…LGYM) and 69-104 (PNEV…KLST). The Ca(2+) site is built by Asp-46, Asp-48, Asn-50, Glu-57, Asp-82, Asp-84, Asp-86, Gln-88, and Glu-93. A helical; Anchor for type IV membrane protein transmembrane segment spans residues 189–209 (LICAFAIAFIISVMLIAANQV). The Extracellular portion of the chain corresponds to 210–215 (LRSGMK).

As to quaternary structure, interacts with PI4KB. This binding competes with FREQ/NCS1 binding in a calcium-dependent manner.

The protein resides in the golgi apparatus. It is found in the trans-Golgi network membrane. The protein localises to the cytoplasm. It localises to the perinuclear region. Its subcellular location is the cell membrane. Negatively regulates Golgi-to-plasma membrane trafficking by interacting with PI4KB and inhibiting its activity. This chain is Calcium-binding protein 7 (CABP7), found in Homo sapiens (Human).